A 269-amino-acid polypeptide reads, in one-letter code: MNKRKGLVLLLSVFALLGGGCSQTNNKTDRQAQTVIVGTGTDFPNIAFLNEKGELTGYDIEVMKAIDKELPQYTFEFKTMDFSNLLTSLGNKKIDVIAHNMAKNKEREKRFLYHKVPYNYSPMYITVKEDNHKIHTLKDLHGKTVIVGATSNAADYITKYNKTHGSPIHLKYAGQGSNDTANQIETGRADATIATPFAVDFQNKTHAFRQKTVGDVLLDTEVYFMFNKGSQTLADDTDQAIKKLEKNGTLKKLSRKWLGADYSKSSFEK.

Positions 1–20 are cleaved as a signal peptide; the sequence is MNKRKGLVLLLSVFALLGGG. Residue Cys21 is the site of N-palmitoyl cysteine attachment. Cys21 carries the S-diacylglycerol cysteine lipid modification.

It belongs to the bacterial solute-binding protein 3 family. In terms of assembly, the complex is composed of two ATP-binding proteins (TcyN), two transmembrane proteins (TcyL and TcyM) and two solute-binding proteins (TcyJ and TcyK).

It localises to the cell membrane. Functionally, part of the ABC transporter complex TcyJKLMN involved in L-cystine import. Is also involved in cystathionine, djenkolate, and S-methylcysteine transport. This is L-cystine-binding protein TcyJ (tcyJ) from Bacillus subtilis (strain 168).